We begin with the raw amino-acid sequence, 362 residues long: Transcriptional repressor PifC (362 aa).

Its function is as follows. Transcription repression of its own gene by binding to the PIF operator (pifO) and replication initiation from the primary origin (ori-1). Transcriptional repressor of the pifA and pifB. This is Transcriptional repressor PifC (pifC) from Escherichia coli (strain K12).